Reading from the N-terminus, the 150-residue chain is SsrA-binding protein (150 aa).

Belongs to the SmpB family.

The protein resides in the cytoplasm. Its function is as follows. Required for rescue of stalled ribosomes mediated by trans-translation. Binds to transfer-messenger RNA (tmRNA), required for stable association of tmRNA with ribosomes. tmRNA and SmpB together mimic tRNA shape, replacing the anticodon stem-loop with SmpB. tmRNA is encoded by the ssrA gene; the 2 termini fold to resemble tRNA(Ala) and it encodes a 'tag peptide', a short internal open reading frame. During trans-translation Ala-aminoacylated tmRNA acts like a tRNA, entering the A-site of stalled ribosomes, displacing the stalled mRNA. The ribosome then switches to translate the ORF on the tmRNA; the nascent peptide is terminated with the 'tag peptide' encoded by the tmRNA and targeted for degradation. The ribosome is freed to recommence translation, which seems to be the essential function of trans-translation. This chain is SsrA-binding protein, found in Chlamydia caviae (strain ATCC VR-813 / DSM 19441 / 03DC25 / GPIC) (Chlamydophila caviae).